Consider the following 301-residue polypeptide: Methionyl-tRNA formyltransferase (301 aa).

(6S)-5,6,7,8-tetrahydrofolate is bound at residue 110 to 113; sequence SLLP.

This sequence belongs to the Fmt family.

The enzyme catalyses L-methionyl-tRNA(fMet) + (6R)-10-formyltetrahydrofolate = N-formyl-L-methionyl-tRNA(fMet) + (6S)-5,6,7,8-tetrahydrofolate + H(+). Functionally, attaches a formyl group to the free amino group of methionyl-tRNA(fMet). The formyl group appears to play a dual role in the initiator identity of N-formylmethionyl-tRNA by promoting its recognition by IF2 and preventing the misappropriation of this tRNA by the elongation apparatus. The protein is Methionyl-tRNA formyltransferase of Acidiphilium cryptum (strain JF-5).